The sequence spans 293 residues: Elongation factor Ts (293 aa).

Residues 80–83 (TDFV) form an involved in Mg(2+) ion dislocation from EF-Tu region.

Belongs to the EF-Ts family.

It is found in the cytoplasm. In terms of biological role, associates with the EF-Tu.GDP complex and induces the exchange of GDP to GTP. It remains bound to the aminoacyl-tRNA.EF-Tu.GTP complex up to the GTP hydrolysis stage on the ribosome. The polypeptide is Elongation factor Ts (Staphylococcus aureus (strain USA300)).